Reading from the N-terminus, the 673-residue chain is UvrABC system protein B (673 aa).

The Helicase ATP-binding domain occupies 28 to 414; sequence ASILQNKRSQ…EAGGEIVEQL (387 aa). Residue 41–48 participates in ATP binding; the sequence is GITGSGKT. The short motif at 94–117 is the Beta-hairpin element; that stretch reads YYDYYQPEAYVPRTDTYIEKDMSI. Residues 433–595 enclose the Helicase C-terminal domain; sequence QVDDCLAEIR…ITPRTVKREI (163 aa). In terms of domain architecture, UVR spans 633 to 668; it reads RLKIKECEKEMKKAAKEFRFEEAADWRDQMRRYQQI.

It belongs to the UvrB family. As to quaternary structure, forms a heterotetramer with UvrA during the search for lesions. Interacts with UvrC in an incision complex.

It is found in the cytoplasm. In terms of biological role, the UvrABC repair system catalyzes the recognition and processing of DNA lesions. A damage recognition complex composed of 2 UvrA and 2 UvrB subunits scans DNA for abnormalities. Upon binding of the UvrA(2)B(2) complex to a putative damaged site, the DNA wraps around one UvrB monomer. DNA wrap is dependent on ATP binding by UvrB and probably causes local melting of the DNA helix, facilitating insertion of UvrB beta-hairpin between the DNA strands. Then UvrB probes one DNA strand for the presence of a lesion. If a lesion is found the UvrA subunits dissociate and the UvrB-DNA preincision complex is formed. This complex is subsequently bound by UvrC and the second UvrB is released. If no lesion is found, the DNA wraps around the other UvrB subunit that will check the other stand for damage. The polypeptide is UvrABC system protein B (Protochlamydia amoebophila (strain UWE25)).